We begin with the raw amino-acid sequence, 497 residues long: Glycerol kinase (497 aa).

Thr12 lines the ADP pocket. ATP-binding residues include Thr12, Thr13, and Ser14. Position 12 (Thr12) interacts with sn-glycerol 3-phosphate. Arg16 provides a ligand contact to ADP. Residues Arg82, Glu83, Tyr134, and Asp243 each coordinate sn-glycerol 3-phosphate. The glycerol site is built by Arg82, Glu83, Tyr134, Asp243, and Gln244. 2 residues coordinate ADP: Thr265 and Gly308. Thr265, Gly308, Gln312, and Gly409 together coordinate ATP. ADP-binding residues include Gly409 and Asn413.

The protein belongs to the FGGY kinase family.

It carries out the reaction glycerol + ATP = sn-glycerol 3-phosphate + ADP + H(+). It functions in the pathway polyol metabolism; glycerol degradation via glycerol kinase pathway; sn-glycerol 3-phosphate from glycerol: step 1/1. Its activity is regulated as follows. Inhibited by fructose 1,6-bisphosphate (FBP). Key enzyme in the regulation of glycerol uptake and metabolism. Catalyzes the phosphorylation of glycerol to yield sn-glycerol 3-phosphate. This Nitratidesulfovibrio vulgaris (strain DSM 19637 / Miyazaki F) (Desulfovibrio vulgaris) protein is Glycerol kinase.